A 194-amino-acid polypeptide reads, in one-letter code: Inosine triphosphate pyrophosphatase (194 aa).

Residue 8–13 (TGNANK) participates in ITP binding. Residue Glu47 coordinates Mg(2+). ITP contacts are provided by residues Lys59, 75-76 (DT), Lys92, 151-154 (FGWD), Lys174, and 179-180 (HR).

Belongs to the HAM1 NTPase family. Homodimer. It depends on Mg(2+) as a cofactor. Mn(2+) is required as a cofactor.

The protein localises to the cytoplasm. It is found in the nucleus. The enzyme catalyses ITP + H2O = IMP + diphosphate + H(+). The catalysed reaction is dITP + H2O = dIMP + diphosphate + H(+). It carries out the reaction XTP + H2O = XMP + diphosphate + H(+). In terms of biological role, pyrophosphatase that hydrolyzes non-canonical purine nucleotides such as inosine triphosphate (ITP), deoxyinosine triphosphate (dITP) or xanthosine 5'-triphosphate (XTP) to their respective monophosphate derivatives. The enzyme does not distinguish between the deoxy- and ribose forms. Probably excludes non-canonical purines from RNA and DNA precursor pools, thus preventing their incorporation into RNA and DNA and avoiding chromosomal lesions. This Scheffersomyces stipitis (strain ATCC 58785 / CBS 6054 / NBRC 10063 / NRRL Y-11545) (Yeast) protein is Inosine triphosphate pyrophosphatase.